Consider the following 366-residue polypeptide: Histone-lysine N-methyltransferase SETD7 (366 aa).

3 MORN repeats span residues 36-58, 59-81, and 106-128; these read FEGH…DGST, LEGF…DGGS, and FKGQ…DGGS. Positions 214 to 336 constitute an SET domain; sequence ERVYVNDSLI…KDEELTVAYG (123 aa). S-adenosyl-L-methionine contacts are provided by residues 226–228, Asn-296, and His-297; that span reads AGE.

This sequence belongs to the class V-like SAM-binding methyltransferase superfamily. Histone-lysine methyltransferase family. SET7 subfamily.

It localises to the nucleus. Its subcellular location is the chromosome. The catalysed reaction is L-lysyl(4)-[histone H3] + S-adenosyl-L-methionine = N(6)-methyl-L-lysyl(4)-[histone H3] + S-adenosyl-L-homocysteine + H(+). The enzyme catalyses L-lysyl-[protein] + S-adenosyl-L-methionine = N(6)-methyl-L-lysyl-[protein] + S-adenosyl-L-homocysteine + H(+). In terms of biological role, histone methyltransferase that specifically monomethylates 'Lys-4' of histone H3. H3 'Lys-4' methylation represents a specific tag for epigenetic transcriptional activation. Plays a central role in the transcriptional activation of genes. Also has methyltransferase activity toward non-histone proteins. The protein is Histone-lysine N-methyltransferase SETD7 (setd7) of Xenopus tropicalis (Western clawed frog).